The sequence spans 219 residues: Guanylate kinase (219 aa).

The region spanning 15–194 is the Guanylate kinase-like domain; that stretch reads GLMFVLSSPS…AFAEVQSILK (180 aa). 22–29 provides a ligand contact to ATP; sequence SPSGAGKT.

The protein belongs to the guanylate kinase family.

The protein resides in the cytoplasm. The catalysed reaction is GMP + ATP = GDP + ADP. Functionally, essential for recycling GMP and indirectly, cGMP. In Nitrobacter winogradskyi (strain ATCC 25391 / DSM 10237 / CIP 104748 / NCIMB 11846 / Nb-255), this protein is Guanylate kinase.